The following is a 64-amino-acid chain: UPF0434 protein Bmul_0750/BMULJ_02510 (64 aa).

Belongs to the UPF0434 family.

This Burkholderia multivorans (strain ATCC 17616 / 249) protein is UPF0434 protein Bmul_0750/BMULJ_02510.